We begin with the raw amino-acid sequence, 431 residues long: Glucose-1-phosphate adenylyltransferase (431 aa).

Lys39 contacts beta-D-fructose 1,6-bisphosphate. Residues Arg40, His46, and Arg52 each coordinate AMP. Alpha-D-glucose 1-phosphate-binding positions include Tyr114, Gly179, Glu194–Lys195, and Ser212. The AMP site is built by Glu370 and Arg386. Beta-D-fructose 1,6-bisphosphate-binding positions include Arg419–Arg423 and Gln429–Arg431.

Belongs to the bacterial/plant glucose-1-phosphate adenylyltransferase family. In terms of assembly, homotetramer.

The enzyme catalyses alpha-D-glucose 1-phosphate + ATP + H(+) = ADP-alpha-D-glucose + diphosphate. It participates in glycan biosynthesis; glycogen biosynthesis. Allosterically activated by fructose-1,6-bisphosphate (F16BP) and inhibited by AMP. Involved in the biosynthesis of ADP-glucose, a building block required for the elongation reactions to produce glycogen. Catalyzes the reaction between ATP and alpha-D-glucose 1-phosphate (G1P) to produce pyrophosphate and ADP-Glc. In Salmonella typhi, this protein is Glucose-1-phosphate adenylyltransferase.